The chain runs to 250 residues: Cyclin-Q (250 aa).

Met1 carries the post-translational modification N-acetylmethionine. Residues Met1–Glu10 show a composition bias toward basic and acidic residues. The tract at residues Met1 to Pro22 is disordered.

Belongs to the cyclin family. Cyclin-like FAM58 subfamily. Associates with CDK10 to promote its kinase activity.

Activating cyclin for the cyclin-associated kinase CDK10. The chain is Cyclin-Q (Ccnq) from Rattus norvegicus (Rat).